Consider the following 293-residue polypeptide: 33 kDa chaperonin (293 aa).

2 disulfide bridges follow: cysteine 236–cysteine 238 and cysteine 269–cysteine 272.

It belongs to the HSP33 family. Under oxidizing conditions two disulfide bonds are formed involving the reactive cysteines. Under reducing conditions zinc is bound to the reactive cysteines and the protein is inactive.

The protein resides in the cytoplasm. Redox regulated molecular chaperone. Protects both thermally unfolding and oxidatively damaged proteins from irreversible aggregation. Plays an important role in the bacterial defense system toward oxidative stress. The protein is 33 kDa chaperonin of Lactobacillus delbrueckii subsp. bulgaricus (strain ATCC 11842 / DSM 20081 / BCRC 10696 / JCM 1002 / NBRC 13953 / NCIMB 11778 / NCTC 12712 / WDCM 00102 / Lb 14).